Consider the following 435-residue polypeptide: Cyclic 2,3-diphosphoglycerate synthetase (435 aa).

It belongs to the cyclic 2,3-diphosphoglycerate synthetase family.

The protein localises to the cytoplasm. The enzyme catalyses (2R)-2,3-bisphosphoglycerate + ATP + H(+) = cyclic (2R)-2,3-bisphosphoglycerate + ADP + phosphate. Functionally, catalyzes the formation of cyclic 2,3-diphosphoglycerate (cDPG) by formation of an intramolecular phosphoanhydride bond at the expense of ATP. In Pyrococcus horikoshii (strain ATCC 700860 / DSM 12428 / JCM 9974 / NBRC 100139 / OT-3), this protein is Cyclic 2,3-diphosphoglycerate synthetase.